Consider the following 305-residue polypeptide: Tyrosine recombinase XerC (305 aa).

Residues 4-95 (TSIQALINKW…AVKNFYRFLE (92 aa)) form the Core-binding (CB) domain. Residues 116–298 (LLPKALSEDD…SIKHLEAVYT (183 aa)) enclose the Tyr recombinase domain. Catalysis depends on residues arginine 159, lysine 182, histidine 250, arginine 253, and histidine 276. Tyrosine 285 (O-(3'-phospho-DNA)-tyrosine intermediate) is an active-site residue.

The protein belongs to the 'phage' integrase family. XerC subfamily. In terms of assembly, forms a cyclic heterotetrameric complex composed of two molecules of XerC and two molecules of XerD.

It localises to the cytoplasm. Its function is as follows. Site-specific tyrosine recombinase, which acts by catalyzing the cutting and rejoining of the recombining DNA molecules. The XerC-XerD complex is essential to convert dimers of the bacterial chromosome into monomers to permit their segregation at cell division. It also contributes to the segregational stability of plasmids. This chain is Tyrosine recombinase XerC, found in Rickettsia peacockii (strain Rustic).